A 111-amino-acid polypeptide reads, in one-letter code: Large ribosomal subunit protein uL22 (111 aa).

The protein belongs to the universal ribosomal protein uL22 family. As to quaternary structure, part of the 50S ribosomal subunit.

Functionally, this protein binds specifically to 23S rRNA; its binding is stimulated by other ribosomal proteins, e.g. L4, L17, and L20. It is important during the early stages of 50S assembly. It makes multiple contacts with different domains of the 23S rRNA in the assembled 50S subunit and ribosome. Its function is as follows. The globular domain of the protein is located near the polypeptide exit tunnel on the outside of the subunit, while an extended beta-hairpin is found that lines the wall of the exit tunnel in the center of the 70S ribosome. The sequence is that of Large ribosomal subunit protein uL22 from Francisella philomiragia subsp. philomiragia (strain ATCC 25017 / CCUG 19701 / FSC 153 / O#319-036).